The chain runs to 129 residues: Large ribosomal subunit protein bL21 (129 aa).

The segment at 102 to 129 (TDNAKPTKGPRPKKEKVAKEATKEDAAA) is disordered. Basic and acidic residues predominate over residues 116–129 (EKVAKEATKEDAAA).

The protein belongs to the bacterial ribosomal protein bL21 family. Part of the 50S ribosomal subunit. Contacts protein L20.

Its function is as follows. This protein binds to 23S rRNA in the presence of protein L20. This is Large ribosomal subunit protein bL21 from Bradyrhizobium diazoefficiens (strain JCM 10833 / BCRC 13528 / IAM 13628 / NBRC 14792 / USDA 110).